A 108-amino-acid polypeptide reads, in one-letter code: UPF0102 protein Sputcn32_3693 (108 aa).

Belongs to the UPF0102 family.

The sequence is that of UPF0102 protein Sputcn32_3693 from Shewanella putrefaciens (strain CN-32 / ATCC BAA-453).